The sequence spans 358 residues: Protein-arginine kinase (358 aa).

The 232-residue stretch at isoleucine 24–alanine 255 folds into the Phosphagen kinase C-terminal domain. ATP is bound by residues serine 27–arginine 31, histidine 92, arginine 126, arginine 177–methionine 181, and arginine 208–glutamate 213. The short motif at arginine 338–alanine 343 is the RDXXRA motif of the pArg binding pocket involved in allosteric regulation element.

It belongs to the ATP:guanido phosphotransferase family.

The enzyme catalyses L-arginyl-[protein] + ATP = N(omega)-phospho-L-arginyl-[protein] + ADP + H(+). Its activity is regulated as follows. Appears to be allosterically activated by the binding of pArg-containing polypeptides to the pArg-binding pocket localized in the C-terminal domain of McsB. Its function is as follows. Catalyzes the specific phosphorylation of arginine residues in a large number of proteins. Is part of the bacterial stress response system. Protein arginine phosphorylation has a physiologically important role and is involved in the regulation of many critical cellular processes, such as protein homeostasis, motility, competence, and stringent and stress responses, by regulating gene expression and protein activity. This is Protein-arginine kinase from Shouchella clausii (strain KSM-K16) (Alkalihalobacillus clausii).